We begin with the raw amino-acid sequence, 234 residues long: Ribulose-phosphate 3-epimerase (234 aa).

Substrate is bound at residue Ser7. Positions 32, 34, and 65 each coordinate a divalent metal cation. Asp34 functions as the Proton acceptor in the catalytic mechanism. Residues His65, 139 to 142 (GFSG), 172 to 174 (DGG), and 194 to 195 (AS) each bind substrate. Asp172 lines the a divalent metal cation pocket. Residue Asp172 is the Proton donor of the active site.

It belongs to the ribulose-phosphate 3-epimerase family. It depends on a divalent metal cation as a cofactor.

The enzyme catalyses D-ribulose 5-phosphate = D-xylulose 5-phosphate. It participates in carbohydrate degradation. Functionally, catalyzes the reversible epimerization of D-ribulose 5-phosphate to D-xylulose 5-phosphate. The protein is Ribulose-phosphate 3-epimerase of Methanocaldococcus jannaschii (strain ATCC 43067 / DSM 2661 / JAL-1 / JCM 10045 / NBRC 100440) (Methanococcus jannaschii).